Here is a 591-residue protein sequence, read N- to C-terminus: Aspartate--tRNA(Asp/Asn) ligase (591 aa).

Glutamate 174 serves as a coordination point for L-aspartate. The tract at residues 198-201 is aspartate; sequence QLFK. Arginine 220 serves as a coordination point for L-aspartate. Residues 220–222 and glutamine 229 each bind ATP; that span reads RDE. Histidine 450 contributes to the L-aspartate binding site. Residue glutamate 483 participates in ATP binding. L-aspartate is bound at residue arginine 490. Residue 535 to 538 coordinates ATP; sequence GLDR.

It belongs to the class-II aminoacyl-tRNA synthetase family. Type 1 subfamily. In terms of assembly, homodimer.

The protein localises to the cytoplasm. The enzyme catalyses tRNA(Asx) + L-aspartate + ATP = L-aspartyl-tRNA(Asx) + AMP + diphosphate. In terms of biological role, aspartyl-tRNA synthetase with relaxed tRNA specificity since it is able to aspartylate not only its cognate tRNA(Asp) but also tRNA(Asn). Reaction proceeds in two steps: L-aspartate is first activated by ATP to form Asp-AMP and then transferred to the acceptor end of tRNA(Asp/Asn). The polypeptide is Aspartate--tRNA(Asp/Asn) ligase (Pseudomonas putida (strain W619)).